We begin with the raw amino-acid sequence, 535 residues long: uncharacterized protein (535 aa).

WD repeat units follow at residues 189 to 226 (RDDFYTSLLSWSPKGDLAIGLAENIYLWSKELGPTRVL), 228 to 267 (ESIYDVSSVAYSYNGDILAVGRVDGTLQFWQDNERVPRIS), 269 to 314 (HHPG…AVLV), 320 to 359 (AHDEQVCGLTWNHDGSQFASGGNDNRVCLFKGSDLRQPLY), 362 to 404 (QQNA…KIDE), and 462 to 505 (VHSV…SWHN).

It belongs to the WD repeat CDC20/Fizzy family.

This is an uncharacterized protein from Schizosaccharomyces pombe (strain 972 / ATCC 24843) (Fission yeast).